The primary structure comprises 213 residues: Pyridoxine/pyridoxamine 5'-phosphate oxidase (213 aa).

Substrate-binding positions include arginine 8 to tyrosine 11 and lysine 67. Residues arginine 62 to lysine 67, phenylalanine 77 to threonine 78, arginine 83, lysine 84, and glutamine 106 contribute to the FMN site. Tyrosine 124, arginine 128, and serine 132 together coordinate substrate. Residues glutamine 141–serine 142 and tryptophan 186 each bind FMN. A substrate-binding site is contributed by arginine 192–histidine 194. Arginine 196 is a binding site for FMN.

The protein belongs to the pyridoxamine 5'-phosphate oxidase family. In terms of assembly, homodimer. The cofactor is FMN.

The catalysed reaction is pyridoxamine 5'-phosphate + O2 + H2O = pyridoxal 5'-phosphate + H2O2 + NH4(+). It catalyses the reaction pyridoxine 5'-phosphate + O2 = pyridoxal 5'-phosphate + H2O2. Its pathway is cofactor metabolism; pyridoxal 5'-phosphate salvage; pyridoxal 5'-phosphate from pyridoxamine 5'-phosphate: step 1/1. The protein operates within cofactor metabolism; pyridoxal 5'-phosphate salvage; pyridoxal 5'-phosphate from pyridoxine 5'-phosphate: step 1/1. Its function is as follows. Catalyzes the oxidation of either pyridoxine 5'-phosphate (PNP) or pyridoxamine 5'-phosphate (PMP) into pyridoxal 5'-phosphate (PLP). The polypeptide is Pyridoxine/pyridoxamine 5'-phosphate oxidase (Shewanella woodyi (strain ATCC 51908 / MS32)).